We begin with the raw amino-acid sequence, 242 residues long: Small ribosomal subunit protein uS2 (242 aa).

This sequence belongs to the universal ribosomal protein uS2 family.

The polypeptide is Small ribosomal subunit protein uS2 (Shewanella putrefaciens (strain CN-32 / ATCC BAA-453)).